The primary structure comprises 35 residues: Cecropin-B (35 aa).

Leucine amide is present on L35.

It belongs to the cecropin family.

It is found in the secreted. Functionally, cecropins have lytic and antibacterial activity against several Gram-positive and Gram-negative bacteria. The chain is Cecropin-B from Antheraea pernyi (Chinese oak silk moth).